The following is a 226-amino-acid chain: Putative ABC transporter ATP-binding protein DR_2469 (226 aa).

Residues 2 to 225 (IELRHVSHHY…LRVYRERMTW (224 aa)) form the ABC transporter domain. 33–40 (GSNGSGKS) contributes to the ATP binding site.

The protein belongs to the ABC transporter superfamily.

Its subcellular location is the cell membrane. Functionally, probably part of an ABC transporter complex. Responsible for energy coupling to the transport system. The polypeptide is Putative ABC transporter ATP-binding protein DR_2469 (Deinococcus radiodurans (strain ATCC 13939 / DSM 20539 / JCM 16871 / CCUG 27074 / LMG 4051 / NBRC 15346 / NCIMB 9279 / VKM B-1422 / R1)).